Consider the following 446-residue polypeptide: Phosphoglucosamine mutase (446 aa).

Ser104 (phosphoserine intermediate) is an active-site residue. Residues Ser104, Asp241, Asp243, and Asp245 each contribute to the Mg(2+) site. A Phosphoserine modification is found at Ser104.

Belongs to the phosphohexose mutase family. Mg(2+) is required as a cofactor. Activated by phosphorylation.

It catalyses the reaction alpha-D-glucosamine 1-phosphate = D-glucosamine 6-phosphate. Functionally, catalyzes the conversion of glucosamine-6-phosphate to glucosamine-1-phosphate. In Teredinibacter turnerae (strain ATCC 39867 / T7901), this protein is Phosphoglucosamine mutase.